The following is an 84-amino-acid chain: Subtilisin-chymotrypsin inhibitor WSCI (84 aa).

An N-terminal signal peptide occupies residues Met-1 to Asn-12. The disordered stretch occupies residues Met-1–Leu-28. Residues Thr-15–Trp-25 show a composition bias toward basic and acidic residues.

In terms of assembly, monomer.

The protein resides in the secreted. Inhibits B.lichenoformis subtilisin, B.subtilis subtilisin, bovine pancreatic alpha-chymotrypsin and porcine alpha-chymotrypsin with Ki of 3.92 nM, 5.70 nM, 7.24 nM and 9.35 nM respectively. B.lichenoformis subtilisin is inhibited with a molar ratio of 1:0.87. Also inhibits chymotrypsin-like activities from the digestive tracts of the insect larvae T.molitor, P.interpunctella and H.armigera. Does not inhibit bovine pancreatic trypsin, porcine pancreatic elastase, or human leukocyte elastase. This is Subtilisin-chymotrypsin inhibitor WSCI from Triticum aestivum (Wheat).